Reading from the N-terminus, the 125-residue chain is Ribonuclease P protein component (125 aa).

Belongs to the RnpA family. As to quaternary structure, consists of a catalytic RNA component (M1 or rnpB) and a protein subunit.

The enzyme catalyses Endonucleolytic cleavage of RNA, removing 5'-extranucleotides from tRNA precursor.. In terms of biological role, RNaseP catalyzes the removal of the 5'-leader sequence from pre-tRNA to produce the mature 5'-terminus. It can also cleave other RNA substrates such as 4.5S RNA. The protein component plays an auxiliary but essential role in vivo by binding to the 5'-leader sequence and broadening the substrate specificity of the ribozyme. The sequence is that of Ribonuclease P protein component from Clostridium botulinum (strain Eklund 17B / Type B).